A 312-amino-acid polypeptide reads, in one-letter code: MKHLLSISDLSKDEIVGLLDEADRFKEVLEGREVKKLPTLRGRTIFTLFYENSTRTRSSFETAGKWMSADVINISASSSSVKKGESLKDTGLTLSAIGADAIIMRHPASGAAQQLAQFVAPGGNGPSVINAGDGSHQHPTQALLDALTIRQRTGRIEGLKVVIVGDCLHSRVVRSNVDLLSTLGAEVVLVAPPTLLPMGVENWPVRFSYDMDAEIADADVVMMLRVQQERMQGGFFPSHREYATLYGMSKEREARLKDSAIIMHPGPMLRGMEINFQVADAPRTAVLQQVSNGVHMRMAILFALVAGSDATI.

The carbamoyl phosphate site is built by R55 and T56. K83 contributes to the L-aspartate binding site. Carbamoyl phosphate is bound by residues R105, H138, and Q141. 2 residues coordinate L-aspartate: R171 and R225. The carbamoyl phosphate site is built by G266 and P267.

The protein belongs to the aspartate/ornithine carbamoyltransferase superfamily. ATCase family. In terms of assembly, heterododecamer (2C3:3R2) of six catalytic PyrB chains organized as two trimers (C3), and six regulatory PyrI chains organized as three dimers (R2).

It catalyses the reaction carbamoyl phosphate + L-aspartate = N-carbamoyl-L-aspartate + phosphate + H(+). It participates in pyrimidine metabolism; UMP biosynthesis via de novo pathway; (S)-dihydroorotate from bicarbonate: step 2/3. Catalyzes the condensation of carbamoyl phosphate and aspartate to form carbamoyl aspartate and inorganic phosphate, the committed step in the de novo pyrimidine nucleotide biosynthesis pathway. This Corynebacterium glutamicum (strain R) protein is Aspartate carbamoyltransferase catalytic subunit.